Here is a 178-residue protein sequence, read N- to C-terminus: PEST proteolytic signal-containing nuclear protein (178 aa).

Residues 1-15 show a composition bias toward basic and acidic residues; that stretch reads MADGKAGDEKPEKSQ. Residues 1 to 82 are disordered; sequence MADGKAGDEK…FAIGSQTTKK (82 aa). A2 is subject to N-acetylalanine. Residues 37-47 are compositionally biased toward low complexity; the sequence is SSSNGGESSSR. A Phosphoserine modification is found at S53. Residue K64 is modified to N6-acetyllysine. S77, S87, and S119 each carry phosphoserine. Positions 134–178 are disordered; that stretch reads NIGRDTPTSAGPNSFNKGKHGFSDNQKLWERNIKSHLGNVHDQDN. Phosphothreonine is present on T139. The segment covering 139 to 149 has biased composition (polar residues); that stretch reads TPTSAGPNSFN. At S147 the chain carries Phosphoserine. An N6-acetyllysine mark is found at K150 and K152. Residues 160–178 are compositionally biased toward basic and acidic residues; it reads KLWERNIKSHLGNVHDQDN.

As to quaternary structure, interacts with UHRF2/NIRF. In terms of processing, ubiquitinated; mediated by UHRF2 and leading to its subsequent proteasomal degradation. N-terminally acetylated in a HYPK-dependent manner by the NatA acetyltransferase complex which is composed of NAA10 and NAA15.

It is found in the nucleus. Its function is as follows. May be involved in cell cycle regulation. The sequence is that of PEST proteolytic signal-containing nuclear protein (PCNP) from Homo sapiens (Human).